The sequence spans 497 residues: 3-octaprenyl-4-hydroxybenzoate carboxy-lyase (497 aa).

Position 175 (asparagine 175) interacts with Mn(2+). Residues 178–180 (IYR), 192–194 (RWL), and 197–198 (RG) each bind prenylated FMN. Glutamate 241 contacts Mn(2+). Aspartate 290 acts as the Proton donor in catalysis.

The protein belongs to the UbiD family. In terms of assembly, homohexamer. Requires prenylated FMN as cofactor. Mn(2+) is required as a cofactor.

The protein resides in the cell membrane. It carries out the reaction a 4-hydroxy-3-(all-trans-polyprenyl)benzoate + H(+) = a 2-(all-trans-polyprenyl)phenol + CO2. It participates in cofactor biosynthesis; ubiquinone biosynthesis. Its function is as follows. Catalyzes the decarboxylation of 3-octaprenyl-4-hydroxy benzoate to 2-octaprenylphenol, an intermediate step in ubiquinone biosynthesis. The sequence is that of 3-octaprenyl-4-hydroxybenzoate carboxy-lyase from Shigella dysenteriae serotype 1 (strain Sd197).